Reading from the N-terminus, the 90-residue chain is Small ribosomal subunit protein uS15 (90 aa).

It belongs to the universal ribosomal protein uS15 family. Part of the 30S ribosomal subunit. Forms a bridge to the 50S subunit in the 70S ribosome, contacting the 23S rRNA.

Its function is as follows. One of the primary rRNA binding proteins, it binds directly to 16S rRNA where it helps nucleate assembly of the platform of the 30S subunit by binding and bridging several RNA helices of the 16S rRNA. Forms an intersubunit bridge (bridge B4) with the 23S rRNA of the 50S subunit in the ribosome. The sequence is that of Small ribosomal subunit protein uS15 from Campylobacter hominis (strain ATCC BAA-381 / DSM 21671 / CCUG 45161 / LMG 19568 / NCTC 13146 / CH001A).